We begin with the raw amino-acid sequence, 319 residues long: Glycine--tRNA ligase alpha subunit (319 aa).

The disordered stretch occupies residues 290-319 (RQQQPEAPAPGPAAVVGGRDRKDACDVKEG). Residues 307 to 319 (GRDRKDACDVKEG) show a composition bias toward basic and acidic residues.

It belongs to the class-II aminoacyl-tRNA synthetase family. In terms of assembly, tetramer of two alpha and two beta subunits.

Its subcellular location is the cytoplasm. It carries out the reaction tRNA(Gly) + glycine + ATP = glycyl-tRNA(Gly) + AMP + diphosphate. The polypeptide is Glycine--tRNA ligase alpha subunit (Moorella thermoacetica (strain ATCC 39073 / JCM 9320)).